The sequence spans 153 residues: uncharacterized protein (153 aa).

Residues 1–88 (MDKDRPGLPA…VPPPQLDHPG (88 aa)) form a disordered region.

This is an uncharacterized protein from Epstein-Barr virus (strain P3HR-1) (HHV-4).